Consider the following 515-residue polypeptide: 2,3-bisphosphoglycerate-independent phosphoglycerate mutase (515 aa).

2 residues coordinate Mn(2+): D14 and S64. The active-site Phosphoserine intermediate is the S64. Substrate contacts are provided by residues H125, 155 to 156, R187, R193, 263 to 266, and K337; these read RD and RADR. Mn(2+)-binding residues include D404, H408, D445, H446, and H464.

It belongs to the BPG-independent phosphoglycerate mutase family. In terms of assembly, monomer. It depends on Mn(2+) as a cofactor.

It catalyses the reaction (2R)-2-phosphoglycerate = (2R)-3-phosphoglycerate. It participates in carbohydrate degradation; glycolysis; pyruvate from D-glyceraldehyde 3-phosphate: step 3/5. Functionally, catalyzes the interconversion of 2-phosphoglycerate and 3-phosphoglycerate. This chain is 2,3-bisphosphoglycerate-independent phosphoglycerate mutase, found in Cronobacter sakazakii (strain ATCC BAA-894) (Enterobacter sakazakii).